A 333-amino-acid polypeptide reads, in one-letter code: tRNA N6-adenosine threonylcarbamoyltransferase (333 aa).

Residues histidine 111 and histidine 115 each contribute to the Fe cation site. Residues 134-138, aspartate 167, glycine 180, and asparagine 272 each bind substrate; that span reads LVSGG. Aspartate 300 is a binding site for Fe cation.

Belongs to the KAE1 / TsaD family. Fe(2+) is required as a cofactor.

The protein localises to the cytoplasm. The enzyme catalyses L-threonylcarbamoyladenylate + adenosine(37) in tRNA = N(6)-L-threonylcarbamoyladenosine(37) in tRNA + AMP + H(+). Its function is as follows. Required for the formation of a threonylcarbamoyl group on adenosine at position 37 (t(6)A37) in tRNAs that read codons beginning with adenine. Is involved in the transfer of the threonylcarbamoyl moiety of threonylcarbamoyl-AMP (TC-AMP) to the N6 group of A37, together with TsaE and TsaB. TsaD likely plays a direct catalytic role in this reaction. In Legionella pneumophila (strain Corby), this protein is tRNA N6-adenosine threonylcarbamoyltransferase.